A 224-amino-acid chain; its full sequence is Ribonuclease HII (224 aa).

Residues 17–201 (GTVIGVDEAG…VLSNLSVKKV (185 aa)) form the RNase H type-2 domain. Positions 23, 24, and 111 each coordinate a divalent metal cation.

The protein belongs to the RNase HII family. Mn(2+) is required as a cofactor. It depends on Mg(2+) as a cofactor.

The protein localises to the cytoplasm. The catalysed reaction is Endonucleolytic cleavage to 5'-phosphomonoester.. Its function is as follows. Endonuclease that specifically degrades the RNA of RNA-DNA hybrids. The polypeptide is Ribonuclease HII (Pseudothermotoga lettingae (strain ATCC BAA-301 / DSM 14385 / NBRC 107922 / TMO) (Thermotoga lettingae)).